Consider the following 209-residue polypeptide: Large ribosomal subunit protein uL3 (209 aa).

The tract at residues 130-154 (RGPMSHGSKFHRAVGSMGASSDPSR) is disordered.

It belongs to the universal ribosomal protein uL3 family. In terms of assembly, part of the 50S ribosomal subunit. Forms a cluster with proteins L14 and L19.

Functionally, one of the primary rRNA binding proteins, it binds directly near the 3'-end of the 23S rRNA, where it nucleates assembly of the 50S subunit. This is Large ribosomal subunit protein uL3 from Clostridium kluyveri (strain NBRC 12016).